The primary structure comprises 110 residues: V-type proton ATPase subunit G1 (110 aa).

Methionine 1 carries the N-acetylmethionine modification. The tract at residues 60–80 is disordered; it reads KLEETSGDSGANVKRLEQETD.

This sequence belongs to the V-ATPase G subunit family. In terms of assembly, V-ATPase is a heteromultimeric enzyme composed of a peripheral catalytic V1 complex (components A to H) attached to an integral membrane V0 proton pore complex (components: a, c, c'', d and e).

The protein localises to the cell membrane. It localises to the vacuole membrane. Its function is as follows. Catalytic subunit of the peripheral V1 complex of vacuolar ATPase (V-ATPase). V-ATPase is responsible for acidifying a variety of intracellular compartments in eukaryotic cells. In Arabidopsis thaliana (Mouse-ear cress), this protein is V-type proton ATPase subunit G1 (VHA-G1).